Here is a 710-residue protein sequence, read N- to C-terminus: Fatty acid oxidation complex subunit alpha (710 aa).

An enoyl-CoA hydratase region spans residues 1–190 (MSMEKTFNLA…KMGLVNDVVP (190 aa)). Residues 310 to 710 (RKVKKVMVLG…ASDGSQFYKK (401 aa)) are 3-hydroxyacyl-CoA dehydrogenase.

This sequence in the N-terminal section; belongs to the enoyl-CoA hydratase/isomerase family. The protein in the central section; belongs to the 3-hydroxyacyl-CoA dehydrogenase family. As to quaternary structure, heterotetramer of two alpha chains (FadJ) and two beta chains (FadI).

Its subcellular location is the cytoplasm. The enzyme catalyses a (3S)-3-hydroxyacyl-CoA = a (2E)-enoyl-CoA + H2O. The catalysed reaction is a 4-saturated-(3S)-3-hydroxyacyl-CoA = a (3E)-enoyl-CoA + H2O. It carries out the reaction a (3S)-3-hydroxyacyl-CoA + NAD(+) = a 3-oxoacyl-CoA + NADH + H(+). It catalyses the reaction (3S)-3-hydroxybutanoyl-CoA = (3R)-3-hydroxybutanoyl-CoA. The protein operates within lipid metabolism; fatty acid beta-oxidation. Its function is as follows. Catalyzes the formation of a hydroxyacyl-CoA by addition of water on enoyl-CoA. Also exhibits 3-hydroxyacyl-CoA epimerase and 3-hydroxyacyl-CoA dehydrogenase activities. This chain is Fatty acid oxidation complex subunit alpha, found in Shewanella frigidimarina (strain NCIMB 400).